Reading from the N-terminus, the 369-residue chain is Peptide chain release factor 2 (369 aa).

An N5-methylglutamine modification is found at Gln250.

Belongs to the prokaryotic/mitochondrial release factor family. Methylated by PrmC. Methylation increases the termination efficiency of RF2.

It localises to the cytoplasm. Functionally, peptide chain release factor 2 directs the termination of translation in response to the peptide chain termination codons UGA and UAA. The chain is Peptide chain release factor 2 (prfB) from Rickettsia prowazekii (strain Madrid E).